We begin with the raw amino-acid sequence, 403 residues long: S-adenosylmethionine synthase (403 aa).

H14 serves as a coordination point for ATP. D16 contacts Mg(2+). Residue E42 participates in K(+) binding. Residues E55 and Q99 each contribute to the L-methionine site. The segment at 99–109 (QSPEIAEGVDH) is flexible loop. ATP is bound by residues 180 to 182 (DAK), 250 to 251 (RF), D259, 265 to 266 (RK), A282, and K286. D259 is a binding site for L-methionine. An L-methionine-binding site is contributed by K290.

It belongs to the AdoMet synthase family. Homotetramer; dimer of dimers. It depends on Mg(2+) as a cofactor. K(+) serves as cofactor.

The protein localises to the cytoplasm. The enzyme catalyses L-methionine + ATP + H2O = S-adenosyl-L-methionine + phosphate + diphosphate. Its pathway is amino-acid biosynthesis; S-adenosyl-L-methionine biosynthesis; S-adenosyl-L-methionine from L-methionine: step 1/1. Functionally, catalyzes the formation of S-adenosylmethionine (AdoMet) from methionine and ATP. The overall synthetic reaction is composed of two sequential steps, AdoMet formation and the subsequent tripolyphosphate hydrolysis which occurs prior to release of AdoMet from the enzyme. This Deinococcus deserti (strain DSM 17065 / CIP 109153 / LMG 22923 / VCD115) protein is S-adenosylmethionine synthase.